Here is a 265-residue protein sequence, read N- to C-terminus: Mlc titration factor A (265 aa).

Zn(2+)-binding residues include H111, H148, H152, and E211.

Belongs to the MtfA family. In terms of assembly, interacts with Mlc. The cofactor is Zn(2+).

Its subcellular location is the cytoplasm. Functionally, involved in the modulation of the activity of the glucose-phosphotransferase system (glucose-PTS). Interacts with the transcriptional repressor Mlc, preventing its interaction with DNA and leading to the modulation of expression of genes regulated by Mlc, including ptsG, which encodes the PTS system glucose-specific EIICB component. Its function is as follows. Shows zinc-dependent metallopeptidase activity. This is Mlc titration factor A from Pectobacterium atrosepticum (strain SCRI 1043 / ATCC BAA-672) (Erwinia carotovora subsp. atroseptica).